A 234-amino-acid chain; its full sequence is uncharacterized protein (234 aa).

A compositionally biased stretch (low complexity) spans Met1–Ser12. The disordered stretch occupies residues Met1–Arg184. 2 stretches are compositionally biased toward polar residues: residues Thr21 to Ser40 and Lys52 to Pro64. Positions Lys66 to Ser77 are enriched in low complexity. Residues Gly105 to Ser120 show a composition bias toward polar residues. The span at Leu152 to Ser167 shows a compositional bias: basic and acidic residues.

In terms of assembly, interacts with RLK902. In terms of tissue distribution, expressed in stems, rosette leaves and roots and weakly in inflorescences.

This is an uncharacterized protein from Arabidopsis thaliana (Mouse-ear cress).